The primary structure comprises 900 residues: Isoleucine--tRNA ligase (900 aa).

A 'HIGH' region motif is present at residues 58–68 (PYANGNIHIGH). E552 contributes to the L-isoleucyl-5'-AMP binding site. The short motif at 593–597 (KMSKS) is the 'KMSKS' region element. Residue K596 participates in ATP binding.

The protein belongs to the class-I aminoacyl-tRNA synthetase family. IleS type 1 subfamily. As to quaternary structure, monomer.

It localises to the cytoplasm. The catalysed reaction is tRNA(Ile) + L-isoleucine + ATP = L-isoleucyl-tRNA(Ile) + AMP + diphosphate. Catalyzes the attachment of isoleucine to tRNA(Ile). As IleRS can inadvertently accommodate and process structurally similar amino acids such as valine, to avoid such errors it has two additional distinct tRNA(Ile)-dependent editing activities. One activity is designated as 'pretransfer' editing and involves the hydrolysis of activated Val-AMP. The other activity is designated 'posttransfer' editing and involves deacylation of mischarged Val-tRNA(Ile). This Ureaplasma parvum serovar 3 (strain ATCC 700970) protein is Isoleucine--tRNA ligase.